The chain runs to 347 residues: Single-pass membrane and coiled-coil domain-containing protein 2 (347 aa).

Residues 1 to 89 form a disordered region; it reads MMSLQLGTAG…PPSKPDEQEV (89 aa). Basic and acidic residues-rich tracts occupy residues 10–21, 36–51, and 60–86; these read GKERQLAEKSRD, EMDHISDRPDEKDKPS, and YKMDTEKWDGLEQESEHSQDPPSKPDE. A coiled-coil region spans residues 139–238; the sequence is DWLERINNII…MNVLNSKLEM (100 aa). Ser-178 is subject to Phosphoserine. The disordered stretch occupies residues 243-274; it reads GSDADSHNSEDVDTEQEEPLVPEASPSLSASP. Residues 253–262 are compositionally biased toward acidic residues; that stretch reads DVDTEQEEPL. A compositionally biased stretch (low complexity) spans 263 to 273; sequence VPEASPSLSAS. Residues 288–308 form a helical membrane-spanning segment; it reads LFVIVYVVTITGLSCYILFVD.

It localises to the membrane. This is Single-pass membrane and coiled-coil domain-containing protein 2 (Smco2) from Mus musculus (Mouse).